We begin with the raw amino-acid sequence, 434 residues long: Ribosomal protein uS12 methylthiotransferase RimO (434 aa).

An MTTase N-terminal domain is found at 9–125 (PAIFLLSLGC…VLAAIGAKYR (117 aa)). Cys18, Cys54, Cys88, Cys149, Cys153, and Cys156 together coordinate [4Fe-4S] cluster. The region spanning 135-364 (LTPPHYAFLK…MELQEGISAS (230 aa)) is the Radical SAM core domain. The region spanning 367–434 (RKLEGQTLKV…AYELFGRISG (68 aa)) is the TRAM domain.

The protein belongs to the methylthiotransferase family. RimO subfamily. [4Fe-4S] cluster serves as cofactor.

The protein resides in the cytoplasm. It catalyses the reaction L-aspartate(89)-[ribosomal protein uS12]-hydrogen + (sulfur carrier)-SH + AH2 + 2 S-adenosyl-L-methionine = 3-methylsulfanyl-L-aspartate(89)-[ribosomal protein uS12]-hydrogen + (sulfur carrier)-H + 5'-deoxyadenosine + L-methionine + A + S-adenosyl-L-homocysteine + 2 H(+). Functionally, catalyzes the methylthiolation of an aspartic acid residue of ribosomal protein uS12. The sequence is that of Ribosomal protein uS12 methylthiotransferase RimO from Chlorobaculum tepidum (strain ATCC 49652 / DSM 12025 / NBRC 103806 / TLS) (Chlorobium tepidum).